Reading from the N-terminus, the 263-residue chain is Microtubule-associated protein RP/EB family member 1 (263 aa).

The region spanning 14–116 (NLSRHDMLAW…FVQWFKKFFD (103 aa)) is the Calponin-homology (CH) domain. The interval 150–182 (KPLGTGSAGPQRPIVAQRTPATPKGGTGMVKKA) is disordered. The EB1 C-terminal domain occupies 180 to 250 (KKAAGDDESA…LYATDEGFVI (71 aa)).

Belongs to the MAPRE family.

Its subcellular location is the cytoplasm. The protein localises to the cytoskeleton. It is found in the microtubule organizing center. The protein resides in the centrosome. It localises to the golgi apparatus. Its subcellular location is the spindle. The protein localises to the spindle pole. Its function is as follows. Plus-end tracking protein (+TIP) that binds to the plus-end of microtubules and regulates the dynamics of the microtubule cytoskeleton. Promotes cytoplasmic microtubule nucleation and elongation. Involved in mitotic spindle positioning by stabilizing microtubules and promoting dynamic connection between astral microtubules and the cortex during mitotic chromosome segregation. The sequence is that of Microtubule-associated protein RP/EB family member 1 (MAPRE1) from Coturnix japonica (Japanese quail).